The chain runs to 100 residues: uncharacterized protein (100 aa).

This is an uncharacterized protein from Saccharomyces cerevisiae (strain ATCC 204508 / S288c) (Baker's yeast).